Here is a 338-residue protein sequence, read N- to C-terminus: DNA fragmentation factor subunit beta (338 aa).

In terms of domain architecture, CIDE-N spans 4-80 (KPKSVKLRAL…LLTLGQAWQG (77 aa)).

Heterodimer of DFFA and DFFB. Interacts with H1-1.

It localises to the cytoplasm. It is found in the nucleus. Its activity is regulated as follows. Inhibited by DFFA (DFF45). Nuclease that induces DNA fragmentation and chromatin condensation during apoptosis. Degrades naked DNA and induces apoptotic morphology. In Homo sapiens (Human), this protein is DNA fragmentation factor subunit beta (DFFB).